Here is a 176-residue protein sequence, read N- to C-terminus: ATP-dependent protease subunit HslV (176 aa).

Residue threonine 2 is part of the active site. Residues glycine 157, cysteine 160, and threonine 163 each contribute to the Na(+) site.

The protein belongs to the peptidase T1B family. HslV subfamily. A double ring-shaped homohexamer of HslV is capped on each side by a ring-shaped HslU homohexamer. The assembly of the HslU/HslV complex is dependent on binding of ATP.

It is found in the cytoplasm. The enzyme catalyses ATP-dependent cleavage of peptide bonds with broad specificity.. With respect to regulation, allosterically activated by HslU binding. Protease subunit of a proteasome-like degradation complex believed to be a general protein degrading machinery. The sequence is that of ATP-dependent protease subunit HslV from Proteus mirabilis (strain HI4320).